The following is a 510-amino-acid chain: Major facilitator superfamily domain-containing protein 4A (510 aa).

12 helical membrane-spanning segments follow: residues 19–39 (LTYW…GPTL), 53–73 (ISWV…LGGV), 82–102 (LWAL…IPFC), 107–127 (VLAS…TVAN), 139–159 (AFFL…SPLI), 218–238 (YAFW…LFLL), 303–323 (FFAI…MMGA), 345–365 (GYLP…SIPV), 380–400 (VGVV…IFLF), 401–421 (VGTA…LAYT), 434–454 (VLVT…GLIF), and 462–482 (FLVC…LLLF).

This sequence belongs to the major facilitator superfamily.

It localises to the membrane. This chain is Major facilitator superfamily domain-containing protein 4A, found in Mus musculus (Mouse).